The primary structure comprises 334 residues: Dipeptide transport ATP-binding protein DppF (334 aa).

Positions 13 to 262 (LQAIDLKKHY…PRHPYTQALL (250 aa)) constitute an ABC transporter domain. 55–62 (GESGCGKS) provides a ligand contact to ATP.

This sequence belongs to the ABC transporter superfamily. In terms of assembly, the complex is composed of two ATP-binding proteins (DppD and DppF), two transmembrane proteins (DppB and DppC) and a solute-binding protein (DppA). MppA can replace DppA as binding protein for heme and ALA transport.

Its subcellular location is the cell inner membrane. The catalysed reaction is a dipeptide(out) + ATP + H2O = a dipeptide(in) + ADP + phosphate + H(+). Its function is as follows. Part of the ABC transporter DppABCDF involved in dipeptide transport. Responsible for energy coupling to the transport system. In terms of biological role, when a foreign outer membrane heme receptor is expressed in E.coli, DppABCDF can also transport heme and its precursor, 5-aminolevulinic acid (ALA), from the periplasm into the cytoplasm. This chain is Dipeptide transport ATP-binding protein DppF (dppF), found in Escherichia coli (strain K12).